Reading from the N-terminus, the 108-residue chain is Tyrosine-protein phosphatase 5 (108 aa).

Residues 1–108 form the Tyrosine-protein phosphatase domain; it reads QESTVIVMLT…QGNNPSPIIV (108 aa). Aspartate 78 provides a ligand contact to substrate.

The protein belongs to the protein-tyrosine phosphatase family.

It catalyses the reaction O-phospho-L-tyrosyl-[protein] + H2O = L-tyrosyl-[protein] + phosphate. This is Tyrosine-protein phosphatase 5 (STY-5) from Styela plicata (Wrinkled sea squirt).